The sequence spans 754 residues: 1,4-alpha-glucan branching enzyme GlgB (754 aa).

The active-site Nucleophile is aspartate 431. The active-site Proton donor is glutamate 484.

This sequence belongs to the glycosyl hydrolase 13 family. GlgB subfamily. Monomer.

The enzyme catalyses Transfers a segment of a (1-&gt;4)-alpha-D-glucan chain to a primary hydroxy group in a similar glucan chain.. It participates in glycan biosynthesis; glycogen biosynthesis. Its function is as follows. Catalyzes the formation of the alpha-1,6-glucosidic linkages in glycogen by scission of a 1,4-alpha-linked oligosaccharide from growing alpha-1,4-glucan chains and the subsequent attachment of the oligosaccharide to the alpha-1,6 position. The polypeptide is 1,4-alpha-glucan branching enzyme GlgB (Prochlorococcus marinus (strain MIT 9301)).